The chain runs to 320 residues: L-lactate dehydrogenase (320 aa).

NAD(+) is bound by residues valine 19, aspartate 40, arginine 45, and 85–86 (GA). Substrate contacts are provided by glutamine 88 and arginine 94. Residues serine 107, 124-126 (ITN), and serine 149 each bind NAD(+). Residue 126–129 (NPVD) coordinates substrate. 154 to 157 (DSAR) is a binding site for substrate. Residues arginine 159 and histidine 174 each coordinate beta-D-fructose 1,6-bisphosphate. Histidine 181 functions as the Proton acceptor in the catalytic mechanism. Position 228 is a phosphotyrosine (tyrosine 228). Threonine 237 is a substrate binding site.

Belongs to the LDH/MDH superfamily. LDH family. As to quaternary structure, homotetramer.

The protein localises to the cytoplasm. It catalyses the reaction (S)-lactate + NAD(+) = pyruvate + NADH + H(+). It functions in the pathway fermentation; pyruvate fermentation to lactate; (S)-lactate from pyruvate: step 1/1. With respect to regulation, allosterically activated by fructose 1,6-bisphosphate (FBP). Functionally, catalyzes the conversion of lactate to pyruvate. The protein is L-lactate dehydrogenase of Bifidobacterium animalis subsp. lactis (strain AD011).